We begin with the raw amino-acid sequence, 200 residues long: Probable GTP-binding protein EngB (200 aa).

Positions 23–197 (KNSEVVFIGR…RERVLKDVLG (175 aa)) constitute an EngB-type G domain. GTP contacts are provided by residues 31–38 (GRSNVGKS), 58–62 (GKTQL), 83–86 (DLPG), 153–156 (TKMD), and 175–177 (FTA). The Mg(2+) site is built by Ser-38 and Thr-60.

This sequence belongs to the TRAFAC class TrmE-Era-EngA-EngB-Septin-like GTPase superfamily. EngB GTPase family. Mg(2+) is required as a cofactor.

In terms of biological role, necessary for normal cell division and for the maintenance of normal septation. This is Probable GTP-binding protein EngB from Wolinella succinogenes (strain ATCC 29543 / DSM 1740 / CCUG 13145 / JCM 31913 / LMG 7466 / NCTC 11488 / FDC 602W) (Vibrio succinogenes).